The following is a 313-amino-acid chain: 4-diphosphocytidyl-2-C-methyl-D-erythritol kinase (313 aa).

The active site involves Lys29. 113-123 (PMGGGVGGGSS) contacts ATP. Residue Asp155 is part of the active site.

This sequence belongs to the GHMP kinase family. IspE subfamily.

The enzyme catalyses 4-CDP-2-C-methyl-D-erythritol + ATP = 4-CDP-2-C-methyl-D-erythritol 2-phosphate + ADP + H(+). It participates in isoprenoid biosynthesis; isopentenyl diphosphate biosynthesis via DXP pathway; isopentenyl diphosphate from 1-deoxy-D-xylulose 5-phosphate: step 3/6. Its function is as follows. Catalyzes the phosphorylation of the position 2 hydroxy group of 4-diphosphocytidyl-2C-methyl-D-erythritol. In Haemophilus influenzae (strain ATCC 51907 / DSM 11121 / KW20 / Rd), this protein is 4-diphosphocytidyl-2-C-methyl-D-erythritol kinase.